A 416-amino-acid chain; its full sequence is Probable cysteine desulfurase (416 aa).

Residue Lys-236 is modified to N6-(pyridoxal phosphate)lysine. The active-site Cysteine persulfide intermediate is Cys-374.

Belongs to the class-V pyridoxal-phosphate-dependent aminotransferase family. Csd subfamily. Pyridoxal 5'-phosphate serves as cofactor.

It catalyses the reaction (sulfur carrier)-H + L-cysteine = (sulfur carrier)-SH + L-alanine. Functionally, catalyzes the removal of elemental sulfur and selenium atoms from L-cysteine, L-cystine, L-selenocysteine, and L-selenocystine to produce L-alanine. This Xylella fastidiosa (strain 9a5c) protein is Probable cysteine desulfurase (csd).